A 1012-amino-acid polypeptide reads, in one-letter code: DNA polymerase gamma (1012 aa).

Belongs to the DNA polymerase type-A family. Mg(2+) serves as cofactor.

Its subcellular location is the mitochondrion. The enzyme catalyses DNA(n) + a 2'-deoxyribonucleoside 5'-triphosphate = DNA(n+1) + diphosphate. Its function is as follows. Involved in the replication of mitochondrial DNA. This Komagataella pastoris (Yeast) protein is DNA polymerase gamma (MIP1).